Reading from the N-terminus, the 350-residue chain is UDP-glucose 4-epimerase (350 aa).

Position 7-38 (7-38) interacts with NAD(+); it reads KILVTGSAGFIGTHTVVQLLNNGFNVSIIDNF. Substrate is bound at residue serine 133. The active-site Proton acceptor is tyrosine 157.

This sequence belongs to the NAD(P)-dependent epimerase/dehydratase family. The cofactor is NAD(+).

It catalyses the reaction UDP-alpha-D-glucose = UDP-alpha-D-galactose. The protein operates within carbohydrate metabolism; galactose metabolism. This Pisum sativum (Garden pea) protein is UDP-glucose 4-epimerase (GALE).